The sequence spans 63 residues: Large ribosomal subunit protein uL30 (63 aa).

This sequence belongs to the universal ribosomal protein uL30 family. As to quaternary structure, part of the 50S ribosomal subunit.

This Bradyrhizobium sp. (strain BTAi1 / ATCC BAA-1182) protein is Large ribosomal subunit protein uL30.